A 94-amino-acid polypeptide reads, in one-letter code: MNSKLTALIFLGLIAIAYCGWINEEKIQKKIDERMGNTVLGGMAKAIVHKMAKNEFQCMANMDMLGNCEKHCQTSGEKGYCHGTKCKCGTPLSY.

An N-terminal signal peptide occupies residues 1–19; sequence MNSKLTALIFLGLIAIAYC. A BetaSPN-type CS-alpha/beta domain is found at 55–94; sequence EFQCMANMDMLGNCEKHCQTSGEKGYCHGTKCKCGTPLSY. Intrachain disulfides connect cysteine 58–cysteine 81, cysteine 68–cysteine 86, and cysteine 72–cysteine 88.

It belongs to the long chain scorpion toxin family. Class 3 subfamily. Expressed by the venom gland.

The protein localises to the secreted. It localises to the target cell membrane. Its function is as follows. This full-length protein shows antibacterial activity against B.subtilis and K.pneumoniae. Also shows a potent inhibitory effect on the ookinete (ED(50) 0.7 uM) and gamete (ED(50) 10 uM) stages of Plasmodium berghei development. In addition, induces cell membrane disruption, leakage currents and cell death on HEK293 cell line (tested at 25 uM). The protein is Scorpine of Pandinus imperator (Emperor scorpion).